The chain runs to 651 residues: Probable replication restart protein PriA (651 aa).

8 residues coordinate Zn(2+): Cys371, Cys374, Cys380, Cys383, Cys399, Cys402, Cys411, and Cys414.

The protein belongs to the helicase family. PriA subfamily. In terms of assembly, component of the replication restart primosome. Zn(2+) is required as a cofactor.

Functionally, initiates the restart of stalled replication forks, which reloads the replicative helicase on sites other than the origin of replication. Recognizes and binds to abandoned replication forks and remodels them to uncover a helicase loading site. Promotes assembly of the primosome at these replication forks. The protein is Probable replication restart protein PriA of Mycobacterium leprae (strain TN).